Reading from the N-terminus, the 180-residue chain is CASP-like protein XL3 (180 aa).

The Cytoplasmic portion of the chain corresponds to 1-7; it reads MELSIQK. The chain crosses the membrane as a helical span at residues 8-28; that stretch reads IEALIRLSTIVMLVLTACLIG. The Extracellular portion of the chain corresponds to 29 to 49; the sequence is LDSQTKVIFYVQKKASFKDLR. The helical transmembrane segment at 50–70 threads the bilayer; sequence ALVGLLYITSLAAAYNLLQLC. Residues 71–98 are Cytoplasmic-facing; the sequence is CSSFSASYKGTSLQSYAYLAWLRYILDQ. A helical membrane pass occupies residues 99-119; it reads AVVYAVFAGNLAALEHSFLVL. The Extracellular segment spans residues 120 to 140; that stretch reads TGEENFQWLKWCNKYTRFCTQ. A helical transmembrane segment spans residues 141–161; it reads IGGSLLCGFVASLLMFSIASI. Residues 162-180 are Cytoplasmic-facing; that stretch reads SAFNLFRQYSPTKFMHLKL.

The protein belongs to the Casparian strip membrane proteins (CASP) family. As to quaternary structure, homodimer and heterodimers.

Its subcellular location is the cell membrane. This is CASP-like protein XL3 (XL3) from Gossypium hirsutum (Upland cotton).